Consider the following 244-residue polypeptide: Probable transcriptional regulatory protein DR_2548 (244 aa).

A disordered region spans residues 1–23 (MAGHSKWAQIKRKKGANDKKRSA).

Belongs to the TACO1 family.

The protein resides in the cytoplasm. The protein is Probable transcriptional regulatory protein DR_2548 of Deinococcus radiodurans (strain ATCC 13939 / DSM 20539 / JCM 16871 / CCUG 27074 / LMG 4051 / NBRC 15346 / NCIMB 9279 / VKM B-1422 / R1).